The sequence spans 111 residues: Carboxysome shell protein CcmK1 (111 aa).

The BMC domain occupies Ala-4–Pro-90.

The protein belongs to the bacterial microcompartments protein family. CcmK subfamily. As to quaternary structure, homohexamer. Interacts with full-length CcmM. Forms mixed heterohexamers of all possible stoichiometries with CcmK2, which might form dodecamers. Only very weak interactions with CcmK3 and CcmK4 were seen. Interacts with CcmN and CcmO in the carboxysome.

It localises to the carboxysome. One of the shell proteins of the carboxysome, a polyhedral inclusion where RuBisCO (ribulose bisphosphate carboxylase, rbcL-rbcS) is sequestered. Assembles into hexamers which make sheets that form the facets of the polyhedral carboxysome. The hexamer central pore probably regulates metabolite flux. Its function is as follows. Probably the major shell protein of the carboxysome, a polyhedral inclusion where RuBisCO (ribulose bisphosphate carboxylase, rbcL-rbcS) is sequestered. The central pore probably regulates metabolite flux. Hexamers make sheets that form the facets of the carboxysome. This Synechocystis sp. (strain ATCC 27184 / PCC 6803 / Kazusa) protein is Carboxysome shell protein CcmK1.